The chain runs to 307 residues: Recombination-associated protein RdgC (307 aa).

This sequence belongs to the RdgC family.

It localises to the cytoplasm. It is found in the nucleoid. In terms of biological role, may be involved in recombination. This chain is Recombination-associated protein RdgC, found in Colwellia psychrerythraea (strain 34H / ATCC BAA-681) (Vibrio psychroerythus).